Reading from the N-terminus, the 179-residue chain is Peptide deformylase 2 (179 aa).

Fe cation contacts are provided by cysteine 102 and histidine 144. The active site involves glutamate 145. Histidine 148 is a Fe cation binding site.

It belongs to the polypeptide deformylase family. It depends on Fe(2+) as a cofactor.

It catalyses the reaction N-terminal N-formyl-L-methionyl-[peptide] + H2O = N-terminal L-methionyl-[peptide] + formate. In terms of biological role, removes the formyl group from the N-terminal Met of newly synthesized proteins. Requires at least a dipeptide for an efficient rate of reaction. N-terminal L-methionine is a prerequisite for activity but the enzyme has broad specificity at other positions. This Nostoc sp. (strain PCC 7120 / SAG 25.82 / UTEX 2576) protein is Peptide deformylase 2.